The primary structure comprises 594 residues: Arginine--tRNA ligase (594 aa).

A 'HIGH' region motif is present at residues 139–149; it reads ANPTGPLHVGH.

The protein belongs to the class-I aminoacyl-tRNA synthetase family. In terms of assembly, monomer.

It is found in the cytoplasm. The enzyme catalyses tRNA(Arg) + L-arginine + ATP = L-arginyl-tRNA(Arg) + AMP + diphosphate. In Burkholderia mallei (strain NCTC 10247), this protein is Arginine--tRNA ligase.